Here is a 378-residue protein sequence, read N- to C-terminus: MQLPTFLEVYEGLISTSSISSTDPSWDQGNAKVIEKLATWFKDLGFHVEVIEVESGKHNMIARMGEGEGGLLLAGHSDTVPFDEGRWSFDPHKLTEKDNRFYGLGTADMKGFFAFIYEAVKKVDWSKQNKPLYVLATCDEETTMLGARHFTTNAPFKPDYCIIGEPTSLVPIRGHKGHVANAIRVTGKSGHSSDPALGVNAIEIMHEVLFAMMQLRDKLIKEYHHPGFAIPSPTLNLGHIHGGDSANRICGCCELHYDVRPLPGISLDGLENMLRSALQEVEAKWPGRIDIVPLHEPIPGYECQHDHPFIGGVEEICQTSSQTVNYCTEAPFLQQLCPTLVLGPGSIEQAHQPDEFLSFDFIDPTIDVLSKAMVKYCC.

Zn(2+) is bound at residue H76. D78 is a catalytic residue. D108 is a binding site for Zn(2+). E140 is an active-site residue. The Zn(2+) site is built by E141, E165, and H351.

The protein belongs to the peptidase M20A family. ArgE subfamily. Homodimer. Requires Zn(2+) as cofactor. It depends on Co(2+) as a cofactor. The cofactor is glutathione.

It localises to the cytoplasm. The catalysed reaction is N(2)-acetyl-L-ornithine + H2O = L-ornithine + acetate. Its pathway is amino-acid biosynthesis; L-arginine biosynthesis; L-ornithine from N(2)-acetyl-L-ornithine (linear): step 1/1. Functionally, catalyzes the hydrolysis of the amide bond of N(2)-acetylated L-amino acids. Cleaves the acetyl group from N-acetyl-L-ornithine to form L-ornithine, an intermediate in L-arginine biosynthesis pathway, and a branchpoint in the synthesis of polyamines. The protein is Acetylornithine deacetylase of Vibrio parahaemolyticus serotype O3:K6 (strain RIMD 2210633).